A 450-amino-acid chain; its full sequence is Probable glycosidase CRR1 (450 aa).

An N-terminal signal peptide occupies residues 1 to 17; it reads MSKRIIQLILLSAFARA. The GH16 domain occupies 67-347; sequence SPESCVPVPA…WENAPDIKAH (281 aa). Residue E225 is the Nucleophile of the active site. The Proton donor role is filled by E229. The segment at 428–450 is disordered; it reads AQRQQHHRRSLPHVEAPPITNTM.

This sequence belongs to the glycosyl hydrolase 16 family. CRR1 subfamily.

Its subcellular location is the spore wall. Functionally, spore specific glycosidase involved in spore wall assembly during sporulation. May be involved in copper import. This is Probable glycosidase CRR1 (CRR1) from Eremothecium gossypii (strain ATCC 10895 / CBS 109.51 / FGSC 9923 / NRRL Y-1056) (Yeast).